We begin with the raw amino-acid sequence, 146 residues long: Tol-Pal system protein TolR (146 aa).

Residues 16–36 (VVPYIDVMLVLLVIFMVTAPM) traverse the membrane as a helical segment.

Belongs to the ExbD/TolR family. In terms of assembly, the Tol-Pal system is composed of five core proteins: the inner membrane proteins TolA, TolQ and TolR, the periplasmic protein TolB and the outer membrane protein Pal. They form a network linking the inner and outer membranes and the peptidoglycan layer.

It is found in the cell inner membrane. In terms of biological role, part of the Tol-Pal system, which plays a role in outer membrane invagination during cell division and is important for maintaining outer membrane integrity. The polypeptide is Tol-Pal system protein TolR (Pseudomonas aeruginosa (strain ATCC 15692 / DSM 22644 / CIP 104116 / JCM 14847 / LMG 12228 / 1C / PRS 101 / PAO1)).